The primary structure comprises 226 residues: Clarin-3 (226 aa).

The helical transmembrane segment at 8 to 28 (LMFLSSFFTSLGSFIVICSIL) threads the bilayer. N-linked (GlcNAc...) asparagine glycosylation is present at asparagine 83. 3 helical membrane-spanning segments follow: residues 92–112 (VTILFLVLSLITSLLSSGFTF), 129–149 (VYTWNGLGASFVFVTMILFVA), and 181–201 (FWLILLVILLNIVTVTIIIFY).

The protein belongs to the clarin family.

It is found in the membrane. The protein is Clarin-3 (CLRN3) of Homo sapiens (Human).